Consider the following 338-residue polypeptide: Patr class I histocompatibility antigen, alpha chain G (338 aa).

The first 24 residues, 1 to 24 (MVVMAPRTLFLLLSGALTLTETWA), serve as a signal peptide directing secretion. The interval 25–114 (GSHSMRYFSA…LRGYYNQSEA (90 aa)) is alpha-1. Topologically, residues 25–308 (GSHSMRYFSA…KQSSLPTIPI (284 aa)) are extracellular. A glycan (N-linked (GlcNAc...) asparagine) is linked at Asn-110. Residues 115–206 (SSHTLQWMIG…ENGKEMLQRA (92 aa)) are alpha-2. Intrachain disulfides connect Cys-125/Cys-188 and Cys-227/Cys-283. Residues 207–298 (DPPKTHVTHH…GLPEPLMLRW (92 aa)) form an alpha-3 region. One can recognise an Ig-like C1-type domain in the interval 209–299 (PKTHVTHHPV…LPEPLMLRWK (91 aa)). Residues 299–308 (KQSSLPTIPI) form a connecting peptide region. The chain crosses the membrane as a helical span at residues 309 to 332 (MGIVAGLVVLAAVVTGAAVAAVLW). Topologically, residues 333 to 338 (RKKSSD) are cytoplasmic.

It belongs to the MHC class I family. As to quaternary structure, heterodimer of an alpha chain and a beta chain (beta-2-microglobulin). Homodimer; disulfide-linked. Binds to LILRB1 and LILRB2.

Its subcellular location is the cell membrane. Involved in the presentation of foreign antigens to the immune system. The sequence is that of Patr class I histocompatibility antigen, alpha chain G (Patr-G) from Pan troglodytes (Chimpanzee).